The following is a 415-amino-acid chain: YDG domain-containing protein At5g47160 (415 aa).

The interval 163 to 186 (KKLSNASRLRANAHRPTQHKDERR) is disordered. In terms of domain architecture, YDG spans 262–407 (GSVPGIKVGD…NILFKFKLRR (146 aa)).

The protein resides in the nucleus. The protein is YDG domain-containing protein At5g47160 of Arabidopsis thaliana (Mouse-ear cress).